The chain runs to 412 residues: Phytoene synthase, chloroplastic (412 aa).

The protein belongs to the phytoene/squalene synthase family. In terms of assembly, monomer. In terms of tissue distribution, expressed in roots, leaves, flower buds, sepals, petals, lips and lip crests.

It localises to the plastid. Its subcellular location is the chloroplast. The enzyme catalyses 2 (2E,6E,10E)-geranylgeranyl diphosphate = 15-cis-phytoene + 2 diphosphate. It participates in carotenoid biosynthesis; phytoene biosynthesis; all-trans-phytoene from geranylgeranyl diphosphate: step 1/1. In terms of biological role, catalyzes the reaction from prephytoene diphosphate to phytoene. The protein is Phytoene synthase, chloroplastic (PSY) of Oncidium hybrid cultivar (Orchid).